The chain runs to 327 residues: Biotin synthase (327 aa).

The Radical SAM core domain maps to 44-273 (FMGNKFDTCS…NAFLRFSGGR (230 aa)). Residues cysteine 62, cysteine 66, and cysteine 69 each coordinate [4Fe-4S] cluster. Residues cysteine 138, cysteine 198, and arginine 268 each coordinate [2Fe-2S] cluster.

The protein belongs to the radical SAM superfamily. Biotin synthase family. As to quaternary structure, homodimer. It depends on [4Fe-4S] cluster as a cofactor. [2Fe-2S] cluster is required as a cofactor.

The catalysed reaction is (4R,5S)-dethiobiotin + (sulfur carrier)-SH + 2 reduced [2Fe-2S]-[ferredoxin] + 2 S-adenosyl-L-methionine = (sulfur carrier)-H + biotin + 2 5'-deoxyadenosine + 2 L-methionine + 2 oxidized [2Fe-2S]-[ferredoxin]. The protein operates within cofactor biosynthesis; biotin biosynthesis; biotin from 7,8-diaminononanoate: step 2/2. Functionally, catalyzes the conversion of dethiobiotin (DTB) to biotin by the insertion of a sulfur atom into dethiobiotin via a radical-based mechanism. The polypeptide is Biotin synthase (Parabacteroides distasonis (strain ATCC 8503 / DSM 20701 / CIP 104284 / JCM 5825 / NCTC 11152)).